The chain runs to 1386 residues: MAERANLVFHNKVIGGTAIKRLISRLIDHFGMAYTSHILDQVKTLGFRQATDTSISLGIDDLLTIPSKGWLVQDAEQQSLILEQHHHYGNVHAVEKLRQSIEIWYATSEYFRQEMNPNFRMTDPFNPVHIMSFSGARGNASQVHQLVGMRGLMSDPQGQMIDLPIQSNLREGLSLTEYIISCYGARKGVVDTAVRTSDAGYLTRRLVEVVQHIVVRRTDCGTIQGISVNTQNGMMPERIWIQTLIGRVLADDIYRGSRCIAVRNQDIGIGLINRFKTLQTQPISIRTPFTCRNTSWICRLCYGQSPTHGHLVELGEAVGIIAGQSIGEPGTQLTLRTFHTGGVFTGGTAEQVRAPYNGKIQFNEDLVHPTRTRHGHPAFLCYIDLYVTIESGDIIHNVTIPPKSFLLVQNNQYVKSEQVIAEIRAGTYTFNLKEKVRKHVYSDLEGEMHWSTDVYHASEFRYSNVHILPKTSHLWILSGKSYRSGSVSFSIRKDQDQMNIHYLSTGERDFCNLLASKKKVRHKLFRFNPSDKKERRISDYSIFNQIISIDHCHFTHPTIFHDTTDLLAKRRRNRLIIPFQFQSIQERDKELMLASSISIEIPINGIFRRNSILAYFDDPQYRTQSSGITKYRTIGINSIFKKEDFLIEYQGVKEFKTKYQIKVDQFFFIPEEVHILPESSSIMVRNNSIVEVDTLITLNIRSRVRGLVRLEKKKKKIELKIFSGDIYFPGEMDKISRHSAVLIPPRTVKKNSKEKKMKNWIYVQWITITKKKYFVLVRPVILYEIADRINLVKLFPQDMFQERDNLELKVINYILSGNGKSIRGISDTSIQLVRTCLVLNWDQDKKFSSIENAHASFVEISIKGLVRYFLRIDLVKSHISYIRKRNNPPGSRFILDNESDRTTINPFFSIDSREKIQQSLSKNHGTIRMLLNRNEKCRSLIILSSSNCFQIRSFNHGKYYNGIKEGINQIQRDAMIPIKNSLGPLGIAPQVAHFDFYRLITHNQISIIKNGQLDKLKETFQVFQYYFLDENERIYKPDLCSNIILNPFYLNWHFLHHNYCEKTFTIMSLGQFICENVCIVQTKNAPHLKSGQILTVQMDSVGIRSANPYLATPGATVHGHYGEILSEGDILVTFIYEKSRSGDITQGLPKVEQVLEVRSIDSISMNLEKRVDTWNGRITKILGIPWGFLIGAELTIAQSRISLVNKIQKVYRSQGVHIHNRHIEIIVRQITSKVLVSEDGMSNVFLPGELIGLLRAERAGRSLEEAICYRVLLLGITKTSLNTQSFISEASFQETARVLSKAALRGRIDWLKGLKENVVLGGMIPVGTGFKRIMNRSKQRQYNKMTSETKKKNLFEGEMRDILFHHREFFFFVSKNLCDTSQQSSI.

Cys220, Cys291, Cys298, and Cys301 together coordinate Zn(2+).

Belongs to the RNA polymerase beta' chain family. RpoC2 subfamily. In plastids the minimal PEP RNA polymerase catalytic core is composed of four subunits: alpha, beta, beta', and beta''. When a (nuclear-encoded) sigma factor is associated with the core the holoenzyme is formed, which can initiate transcription. Requires Zn(2+) as cofactor.

It is found in the plastid. Its subcellular location is the chloroplast. It catalyses the reaction RNA(n) + a ribonucleoside 5'-triphosphate = RNA(n+1) + diphosphate. Its function is as follows. DNA-dependent RNA polymerase catalyzes the transcription of DNA into RNA using the four ribonucleoside triphosphates as substrates. The sequence is that of DNA-directed RNA polymerase subunit beta'' from Glycine max (Soybean).